Here is a 326-residue protein sequence, read N- to C-terminus: Metallophosphoesterase domain-containing protein 1 (326 aa).

It belongs to the UPF0046 family.

Functionally, may have metallophosphoesterase activity (in vitro). The protein is Metallophosphoesterase domain-containing protein 1 (Mpped1) of Mus musculus (Mouse).